We begin with the raw amino-acid sequence, 160 residues long: Small ribosomal subunit protein uS7 (160 aa).

The protein belongs to the universal ribosomal protein uS7 family. As to quaternary structure, part of the 30S ribosomal subunit. Contacts proteins S9 and S11.

In terms of biological role, one of the primary rRNA binding proteins, it binds directly to 16S rRNA where it nucleates assembly of the head domain of the 30S subunit. Is located at the subunit interface close to the decoding center, probably blocks exit of the E-site tRNA. This chain is Small ribosomal subunit protein uS7, found in Rickettsia prowazekii (strain Madrid E).